The chain runs to 670 residues: DEAD-box ATP-dependent RNA helicase 16 (670 aa).

The segment covering 1 to 10 (MAAAAAASSM) has biased composition (low complexity). The tract at residues 1 to 97 (MAAAAAASSM…EEREVSFDEL (97 aa)) is disordered. Composition is skewed to basic and acidic residues over residues 18 to 30 (AATE…HDEA) and 40 to 49 (NDGHTAHAAE). The Q motif signature appears at 92 to 120 (VSFDELGLDEQLKRALRKKGLDKATPIQR). The 184-residue stretch at 123-306 (IPLILEGKDV…KLLLHNPFIL (184 aa)) folds into the Helicase ATP-binding domain. 136–143 (AKTGSGKT) lines the ATP pocket. The DEAD box motif lies at 254 to 257 (DEAD). A Helicase C-terminal domain is found at 340 to 523 (LVLLKLELIQ…PFPLLTKNAV (184 aa)). The segment at 616–670 (DIDKPRRRKRMGFKGGSGRSSDPLKTFSAEGKSRRRGRKERDGEQDRRKRKKVES) is disordered. Over residues 654–670 (KERDGEQDRRKRKKVES) the composition is skewed to basic and acidic residues.

It belongs to the DEAD box helicase family. DDX56/DBP9 subfamily.

It carries out the reaction ATP + H2O = ADP + phosphate + H(+). This chain is DEAD-box ATP-dependent RNA helicase 16, found in Oryza sativa subsp. japonica (Rice).